We begin with the raw amino-acid sequence, 184 residues long: Large ribosomal subunit protein uL6 (184 aa).

This sequence belongs to the universal ribosomal protein uL6 family. In terms of assembly, part of the 50S ribosomal subunit.

In terms of biological role, this protein binds to the 23S rRNA, and is important in its secondary structure. It is located near the subunit interface in the base of the L7/L12 stalk, and near the tRNA binding site of the peptidyltransferase center. This is Large ribosomal subunit protein uL6 from Desulfitobacterium hafniense (strain Y51).